Here is a 232-residue protein sequence, read N- to C-terminus: uncharacterized protein (232 aa).

Residues 1 to 232 (MIIKKSGGRW…LYTMGVSARF (232 aa)) enclose the Autotransporter domain.

This is an uncharacterized protein from Escherichia coli (strain K12).